The following is a 362-amino-acid chain: Shewanella-like protein phosphatase 1 (362 aa).

The first 23 residues, 1–23 (MIFKKALYILLFLYIAIVKKGES), serve as a signal peptide directing secretion. 4 residues coordinate Mn(2+): aspartate 65, histidine 67, aspartate 101, and asparagine 136. Histidine 137 acts as the Proton donor in catalysis. Mn(2+) is bound at residue histidine 196.

It belongs to the metallophosphoesterase superfamily. SLP family. Mn(2+) is required as a cofactor.

Phosphatase which plays an essential role in the development and differentiation of the ookinete and in the formation of ookinete micronemes. The polypeptide is Shewanella-like protein phosphatase 1 (Plasmodium berghei (strain Anka)).